We begin with the raw amino-acid sequence, 309 residues long: Elongation factor Ts (309 aa).

Residues 82–85 (TDFV) form an involved in Mg(2+) ion dislocation from EF-Tu region.

It belongs to the EF-Ts family.

It localises to the cytoplasm. Its function is as follows. Associates with the EF-Tu.GDP complex and induces the exchange of GDP to GTP. It remains bound to the aminoacyl-tRNA.EF-Tu.GTP complex up to the GTP hydrolysis stage on the ribosome. The protein is Elongation factor Ts of Rickettsia akari (strain Hartford).